A 227-amino-acid chain; its full sequence is MKFAVIVFPGSNCDADMYHAIKDGLGEEVEYVFHTETSLDGFDAVLLPGGFSHGDYLRSGAIARFAPIMPAVIQAAEAGKPVLGVCNGFQVLLEAGLLPGAMKRNIDLKFVCRTVELVVENNETMFSSGYEQGQTIRIPVAHGEGNYECDDETLAKLRENKQIVFRYNEHVNGSKGDIAGITNERGNVLGMMPHPERATETLLGNDQGLAVFTSILRNWRESHVTAS.

A Glutamine amidotransferase type-1 domain is found at 3 to 227 (FAVIVFPGSN…NWRESHVTAS (225 aa)). Cysteine 86 functions as the Nucleophile in the catalytic mechanism. Active-site residues include histidine 194 and glutamate 196.

In terms of assembly, part of the FGAM synthase complex composed of 1 PurL, 1 PurQ and 2 PurS subunits.

Its subcellular location is the cytoplasm. The catalysed reaction is N(2)-formyl-N(1)-(5-phospho-beta-D-ribosyl)glycinamide + L-glutamine + ATP + H2O = 2-formamido-N(1)-(5-O-phospho-beta-D-ribosyl)acetamidine + L-glutamate + ADP + phosphate + H(+). It carries out the reaction L-glutamine + H2O = L-glutamate + NH4(+). The protein operates within purine metabolism; IMP biosynthesis via de novo pathway; 5-amino-1-(5-phospho-D-ribosyl)imidazole from N(2)-formyl-N(1)-(5-phospho-D-ribosyl)glycinamide: step 1/2. In terms of biological role, part of the phosphoribosylformylglycinamidine synthase complex involved in the purines biosynthetic pathway. Catalyzes the ATP-dependent conversion of formylglycinamide ribonucleotide (FGAR) and glutamine to yield formylglycinamidine ribonucleotide (FGAM) and glutamate. The FGAM synthase complex is composed of three subunits. PurQ produces an ammonia molecule by converting glutamine to glutamate. PurL transfers the ammonia molecule to FGAR to form FGAM in an ATP-dependent manner. PurS interacts with PurQ and PurL and is thought to assist in the transfer of the ammonia molecule from PurQ to PurL. This is Phosphoribosylformylglycinamidine synthase subunit PurQ from Shouchella clausii (strain KSM-K16) (Alkalihalobacillus clausii).